The sequence spans 383 residues: MESGNVSSSLFGNVSTALRPEARLSAETRLLGWNVPPEELRHIPEHWLTYPEPPESMNYLLGTLYIFFTLMSMLGNGLVIWVFSAAKSLRTPSNILVINLAFCDFMMMVKTPIFIYNSFHQGYALGHLGCQIFGIIGSYTGIAAGATNAFIAYDRFNVITRPMEGKMTHGKAIAMIIFIYMYATPWVVACYTETWGRFVPEGYLTSCTFDYLTDNFDTRLFVACIFFFSFVCPTTMITYYYSQIVGHVFSHEKALRDQAKKMNVESLRSNVDKNKETAEIRIAKAAITICFLFFCSWTPYGVMSLIGAFGDKTLLTPGATMIPACACKMVACIDPFVYAISHPRYRMELQKRCPWLALNEKAPESSAVASTSTTQEPQQTTAA.

Over 1–57 (MESGNVSSSLFGNVSTALRPEARLSAETRLLGWNVPPEELRHIPEHWLTYPEPPESM) the chain is Extracellular. Asn-13 is a glycosylation site (N-linked (GlcNAc...) asparagine). The helical transmembrane segment at 58–82 (NYLLGTLYIFFTLMSMLGNGLVIWV) threads the bilayer. Residues 83–94 (FSAAKSLRTPSN) are Cytoplasmic-facing. The helical transmembrane segment at 95 to 119 (ILVINLAFCDFMMMVKTPIFIYNSF) threads the bilayer. The Extracellular portion of the chain corresponds to 120-133 (HQGYALGHLGCQIF). Cys-130 and Cys-207 are oxidised to a cystine. A helical transmembrane segment spans residues 134 to 153 (GIIGSYTGIAAGATNAFIAY). At 154-171 (DRFNVITRPMEGKMTHGK) the chain is on the cytoplasmic side. The helical transmembrane segment at 172–196 (AIAMIIFIYMYATPWVVACYTETWG) threads the bilayer. At 197-220 (RFVPEGYLTSCTFDYLTDNFDTRL) the chain is on the extracellular side. The helical transmembrane segment at 221-248 (FVACIFFFSFVCPTTMITYYYSQIVGHV) threads the bilayer. Residues 249–284 (FSHEKALRDQAKKMNVESLRSNVDKNKETAEIRIAK) are Cytoplasmic-facing. Residues 285 to 308 (AAITICFLFFCSWTPYGVMSLIGA) traverse the membrane as a helical segment. At 309–316 (FGDKTLLT) the chain is on the extracellular side. A helical membrane pass occupies residues 317–341 (PGATMIPACACKMVACIDPFVYAIS). An N6-(retinylidene)lysine modification is found at Lys-328. The Cytoplasmic portion of the chain corresponds to 342-383 (HPRYRMELQKRCPWLALNEKAPESSAVASTSTTQEPQQTTAA). The tract at residues 362–383 (APESSAVASTSTTQEPQQTTAA) is disordered. Residues 369 to 383 (ASTSTTQEPQQTTAA) show a composition bias toward low complexity.

This sequence belongs to the G-protein coupled receptor 1 family. Opsin subfamily. In terms of processing, phosphorylated on some or all of the serine and threonine residues present in the C-terminal region.

The protein localises to the membrane. Functionally, visual pigments are the light-absorbing molecules that mediate vision. They consist of an apoprotein, opsin, covalently linked to cis-retinal. The protein is Opsin Rh3 (Rh3) of Drosophila melanogaster (Fruit fly).